A 196-amino-acid chain; its full sequence is dTDP-4-dehydro-6-deoxyglucose 3-epimerase (196 aa).

Substrate-binding positions include Arg21, Glu26, 45 to 47 (QVN), and Arg57. The active-site Proton acceptor is the His60. Residues Lys70 and Arg117 each coordinate substrate. Residue Tyr130 is the Proton donor of the active site. The substrate site is built by Glu141 and Arg166.

Belongs to the dTDP-4-dehydrorhamnose 3,5-epimerase family. In terms of assembly, homodimer.

The catalysed reaction is dTDP-4-dehydro-6-deoxy-alpha-D-glucose = dTDP-4-dehydro-6-deoxy-alpha-D-allose. It participates in antibiotic biosynthesis. Functionally, involved in the biosynthesis of dTDP-6-deoxy-D-allose, an intermediate in the biosynthesis of mycinose, which is one of the two unusual sugars attached to the 16-membered macrolactone ring of the aglycone antibiotic dihydrochalcomycin (GERI-155). Catalyzes the conversion of dTDP-4-oxo-6-deoxyglucose to dTDP-4-oxo-6-deoxyallose, via a C-3 epimerization. This is dTDP-4-dehydro-6-deoxyglucose 3-epimerase from Streptomyces sp.